Consider the following 186-residue polypeptide: D-glycero-beta-D-manno-heptose-1,7-bisphosphate 7-phosphatase (186 aa).

The active-site Nucleophile is Asp9. Asp9 and Asp11 together coordinate Mg(2+). Substrate is bound by residues 9-11, 17-20, and 51-54; these read DRD, DHGY, and TNQS. Catalysis depends on Asp11, which acts as the Proton donor. Residues Cys90, His92, Cys105, and Cys107 each coordinate Zn(2+). 108–109 contacts substrate; the sequence is RK. The Mg(2+) site is built by Asp134 and Lys135. Lys135 is a binding site for substrate.

This sequence belongs to the GmhB family. Monomer. Mg(2+) serves as cofactor. Requires Zn(2+) as cofactor.

Its subcellular location is the cytoplasm. The catalysed reaction is D-glycero-beta-D-manno-heptose 1,7-bisphosphate + H2O = D-glycero-beta-D-manno-heptose 1-phosphate + phosphate. The protein operates within nucleotide-sugar biosynthesis; ADP-L-glycero-beta-D-manno-heptose biosynthesis; ADP-L-glycero-beta-D-manno-heptose from D-glycero-beta-D-manno-heptose 7-phosphate: step 2/4. It functions in the pathway bacterial outer membrane biogenesis; LPS core biosynthesis. Its function is as follows. Converts the D-glycero-beta-D-manno-heptose 1,7-bisphosphate intermediate into D-glycero-beta-D-manno-heptose 1-phosphate by removing the phosphate group at the C-7 position in vitro. Also catalyzes the dephosphorylation of D-glycero-alpha-D-manno-heptose-1,7-bisphosphate in vitro. The chain is D-glycero-beta-D-manno-heptose-1,7-bisphosphate 7-phosphatase (gmhB) from Vibrio cholerae serotype O1 (strain ATCC 39315 / El Tor Inaba N16961).